Reading from the N-terminus, the 863-residue chain is DNA ligase (863 aa).

Residues 76-80, 125-126, and glutamate 159 contribute to the NAD(+) site; these read DAAYD and SL. The active-site N6-AMP-lysine intermediate is the lysine 161. NAD(+) contacts are provided by arginine 182 and glutamate 221. The tract at residues 237–256 is disordered; the sequence is EDAGRPPFANPRNAAAGSLR. Low complexity predominate over residues 241–253; it reads RPPFANPRNAAAG. Residues lysine 346 and lysine 370 each coordinate NAD(+). Residues cysteine 467, cysteine 470, cysteine 486, and cysteine 492 each contribute to the Zn(2+) site. The region spanning 781–863 is the BRCT domain; it reads GLPQTLEGKS…DTLLATGDVQ (83 aa).

The protein belongs to the NAD-dependent DNA ligase family. LigA subfamily. It depends on Mg(2+) as a cofactor. Requires Mn(2+) as cofactor.

The catalysed reaction is NAD(+) + (deoxyribonucleotide)n-3'-hydroxyl + 5'-phospho-(deoxyribonucleotide)m = (deoxyribonucleotide)n+m + AMP + beta-nicotinamide D-nucleotide.. In terms of biological role, DNA ligase that catalyzes the formation of phosphodiester linkages between 5'-phosphoryl and 3'-hydroxyl groups in double-stranded DNA using NAD as a coenzyme and as the energy source for the reaction. It is essential for DNA replication and repair of damaged DNA. The polypeptide is DNA ligase (Bifidobacterium animalis subsp. lactis (strain AD011)).